A 1140-amino-acid polypeptide reads, in one-letter code: uncharacterized protein (1140 aa).

Disordered stretches follow at residues 1 to 49 (MGSS…TSPE), 97 to 243 (SSDI…STIS), 280 to 427 (TSSS…KSSV), 512 to 541 (ASST…DLSK), 702 to 747 (FSTP…STAS), 916 to 1059 (CPEK…PIGR), and 1080 to 1103 (LSSS…GTSS). Positions 105-129 (VNDVESSTSGPSNSYSALSSTNAQL) are enriched in polar residues. 3 stretches are compositionally biased toward low complexity: residues 130 to 154 (SSST…TSSS), 172 to 214 (TTAS…TTSD), and 221 to 243 (SSST…STIS). Positions 516–528 (LGSKVSSSNSRMA) are enriched in polar residues. 2 stretches are compositionally biased toward low complexity: residues 529-541 (TSKT…DLSK) and 703-718 (STPE…VTSE). Polar residues predominate over residues 719 to 733 (APSTVSSMTTSAPFI). The span at 734–747 (NNSTSARPSPSTAS) shows a compositional bias: low complexity. Residues 949-961 (SFKDMKTSQETKK) show a composition bias toward basic and acidic residues. Low complexity predominate over residues 977-997 (EKTSPTTKASPSTSPSESKAA). 3 stretches are compositionally biased toward polar residues: residues 998 to 1023 (GNTS…STSV), 1031 to 1055 (TKNS…STES), and 1089 to 1103 (RSTT…GTSS).

This is an uncharacterized protein from Saccharomyces cerevisiae (strain ATCC 204508 / S288c) (Baker's yeast).